We begin with the raw amino-acid sequence, 254 residues long: Large ribosomal subunit protein uL2B (254 aa).

Lysine 46 is covalently cross-linked (Glycyl lysine isopeptide (Lys-Gly) (interchain with G-Cter in ubiquitin)). Serine 52 is modified (phosphoserine). Lysine 93 participates in a covalent cross-link: Glycyl lysine isopeptide (Lys-Gly) (interchain with G-Cter in ubiquitin). Serine 95 carries the post-translational modification Phosphoserine. Glycyl lysine isopeptide (Lys-Gly) (interchain with G-Cter in ubiquitin) cross-links involve residues lysine 119 and lysine 145. Phosphoserine occurs at positions 159, 160, and 249.

Belongs to the universal ribosomal protein uL2 family. As to quaternary structure, component of the large ribosomal subunit (LSU). Mature yeast ribosomes consist of a small (40S) and a large (60S) subunit. The 40S small subunit contains 1 molecule of ribosomal RNA (18S rRNA) and 33 different proteins (encoded by 57 genes). The large 60S subunit contains 3 rRNA molecules (25S, 5.8S and 5S rRNA) and 46 different proteins (encoded by 81 genes).

The protein resides in the cytoplasm. Component of the ribosome, a large ribonucleoprotein complex responsible for the synthesis of proteins in the cell. The small ribosomal subunit (SSU) binds messenger RNAs (mRNAs) and translates the encoded message by selecting cognate aminoacyl-transfer RNA (tRNA) molecules. The large subunit (LSU) contains the ribosomal catalytic site termed the peptidyl transferase center (PTC), which catalyzes the formation of peptide bonds, thereby polymerizing the amino acids delivered by tRNAs into a polypeptide chain. The nascent polypeptides leave the ribosome through a tunnel in the LSU and interact with protein factors that function in enzymatic processing, targeting, and the membrane insertion of nascent chains at the exit of the ribosomal tunnel. The chain is Large ribosomal subunit protein uL2B from Saccharomyces cerevisiae (strain ATCC 204508 / S288c) (Baker's yeast).